The primary structure comprises 205 residues: Protein Rcp (205 aa).

Belongs to the NAD(P)-dependent epimerase/dehydratase family.

This chain is Protein Rcp (rcp), found in Vibrio cholerae serotype O1 (strain ATCC 39315 / El Tor Inaba N16961).